The chain runs to 950 residues: Synaptotagmin-like protein 2 (950 aa).

Residues 1–57 form the RabBD domain; the sequence is MIDLSFLTEEEQDAILKVLQRDAALKRAEEERVRHLPEKIKDDQQLKNMSGQWFYEA. Disordered stretches follow at residues 78–98, 116–289, and 361–620; these read RKKL…AKES, VEEP…ETLR, and ESDQ…SSSG. The segment covering 87 to 97 has biased composition (basic and acidic residues); it reads QNKDTAMRAKE. 2 stretches are compositionally biased toward polar residues: residues 140-150 and 173-183; these read IDMSQESTRTP and LQQTKPEQSKT. A compositionally biased stretch (basic and acidic residues) spans 193 to 205; it reads KEGELSESKEKSS. A compositionally biased stretch (polar residues) spans 219–230; it reads QTVSTEPENASH. Basic and acidic residues predominate over residues 246–264; that stretch reads NDLEKDDNQSFPRQRRDSL. Residues 434–445 are compositionally biased toward polar residues; sequence VESSSVINGQQE. 2 stretches are compositionally biased toward basic and acidic residues: residues 479–502 and 531–544; these read HSFR…LERR and ELVR…KADQ. Residues 557–567 are compositionally biased toward polar residues; that stretch reads TVPSLPDNQFS. The span at 608-620 shows a compositional bias: low complexity; it reads SPSSLTNLSSSSG. 2 consecutive C2 domains span residues 644–769 and 784–913; these read VKGS…LKWY and NRGE…VDWM.

Monomer. Binds NRXN1. Binds RAB27A that has been activated by GTP-binding. Interacts with RAB27B. In terms of processing, isoform 1 is highly susceptible to proteolytic degradation and is stabilized by the interaction with RAB27A. Highly expressed in brain, lung, kidney, testis and in embryos after day 7. Detected at lower levels in skeletal muscle. Expressed in pancreatic alpha cells. Isoform 6 is highly expressed in brain, but not detectable in the other tissues tested. Isoform 1 is expressed abundantly in the stomach and is predominantly localized at the apical region of gastric-surface mucus cells. Isoform 11 is expressed in cytotoxic T-lymphocytes (CTL).

It is found in the melanosome membrane. Its subcellular location is the cell membrane. In terms of biological role, isoform 11 acts as a RAB27A effector protein and plays a role in cytotoxic granule exocytosis in lymphocytes. Required for cytotoxic granule docking at the immunologic synapse. Isoform 1 may play a role in melanosome transport and vesicle trafficking. It controls melanosome distribution in the cell periphery and regulates melanocyte morphology. Isoform 1 acts as a positive mediator of mucus secretion by the surface mucus cells of the stomach. Mediates basal mucus secretion by gastric surface cells by promoting the proper granule biognesis and docking of mucus granules with the apical plasma membrane. The chain is Synaptotagmin-like protein 2 (Sytl2) from Mus musculus (Mouse).